A 293-amino-acid chain; its full sequence is uncharacterized protein (293 aa).

Disordered stretches follow at residues 121–154 and 254–274; these read NLNF…SQNS and DILQ…PQQQ. Residues 133 to 149 are compositionally biased toward basic residues; the sequence is SYHHHSHSHSHHSHSHS. Residues 260–272 are compositionally biased toward pro residues; the sequence is PPSPTPTPPPPPQ.

This is an uncharacterized protein from Dictyostelium discoideum (Social amoeba).